Reading from the N-terminus, the 2471-residue chain is Polyprotein P1234 (2471 aa).

In terms of domain architecture, Alphavirus-like MT spans 28 to 257 (EATQVTDNDH…EERILLRSWH (230 aa)). The tract at residues 242–261 (GSTIYTEERILLRSWHLPNV) is nsP1 membrane-binding. A lipid anchor (S-palmitoyl cysteine; by host) is attached at C417. The (+)RNA virus helicase ATP-binding domain maps to 688 to 839 (DLVDPPFHEF…HEICTEVYHK (152 aa)). A ribonucleoside 5'-triphosphate is bound at residue 719 to 726 (GVPGSGKS). Positions 840–988 (SISRRCTRTV…LEEWQAEHDA (149 aa)) constitute a (+)RNA virus helicase C-terminal domain. The 320-residue stretch at 1001 to 1320 (DVYQNKVHVC…VVLNNIYQGS (320 aa)) folds into the Peptidase C9 domain. The segment at 1002 to 1021 (VYQNKVHVCWAKALEPVLAT) is nucleolus localization signal. C1010 acts as the For cysteine protease nsP2 activity in catalysis. The short motif at 1054–1063 (TRFFGVDIDS) is the Nuclear export signal element. Catalysis depends on H1079, which acts as the For cysteine protease nsP2 activity. Residues 1177–1181 (PGKRV) carry the Nuclear localization signal motif. A Macro domain is found at 1328–1486 (APAYRVIRGD…RIKDAIARKE (159 aa)). ADP-D-ribose is bound by residues D1337, N1351, G1359, G1438, V1439, and Y1440. Zn(2+) contacts are provided by C1589, C1591, C1614, and C1632. A disordered region spans residues 1669–1692 (RRPAPPVPVPARIPSPRCSPAVSM). A compositionally biased stretch (pro residues) spans 1670 to 1681 (RPAPPVPVPARI). Positions 1771 to 1783 (LITFDSVTDIFEN) are binding to host G3BP family members. The segment at 1798–1838 (IPAPRRRREPETDIQRFDKSEEKPVPKPRTRTAKYKKPPGV) is disordered. Over residues 1805-1822 (REPETDIQRFDKSEEKPV) the composition is skewed to basic and acidic residues. A compositionally biased stretch (basic residues) spans 1823 to 1834 (PKPRTRTAKYKK). The tract at residues 1835–1851 (PPGVARSISEAELDEFI) is binding to host FXR family members. Positions 2228–2343 (DAVLETDIAS…KGVKSDALMA (116 aa)) constitute a RdRp catalytic domain.

In terms of assembly, interacts with non-structural protein 3. Interacts with RNA-directed RNA polymerase nsP4. Interacts with protease nsP2. interacts with itself. As to quaternary structure, interacts with mRNA-capping enzyme nsP1. Interacts with host DDX1. Interacts with host DDX3. Interacts (via C-terminus) with host FXR1; this interaction inhibits the formation of host stress granules on viral mRNAs and the nsp3-FXR1 complexes bind viral RNAs and probably orchestrate the assembly of viral replication complexes. Interacts (via C-terminus) with host FXR2; this interaction inhibits the formation of host stress granules on viral mRNAs and the nsp3-FXR2 complexes bind viral RNAs and probably orchestrate the assembly of viral replication complexes. Interacts (via C-terminus) with host FMR1; this interaction inhibits the formation of host stress granules on viral mRNAs and the nsp3-FMR1 complexes bind viral RNAs and probably orchestrate the assembly of viral replication complexes. Interacts (via C-terminus) with host G3BP1; this interaction inhibits the formation of host stress granules on viral mRNAs and the nsp3-G3BP1 complexes bind viral RNAs and probably orchestrate the assembly of viral replication complexes. Interacts (via C-terminus) with host G3BP2; this interaction inhibits the formation of host stress granules on viral mRNAs and the nsp3-G3BP2 complexes bind viral RNAs and probably orchestrate the assembly of viral replication complexes. Interacts with mRNA-capping enzyme nsP1. Interacts with protease nsP2. interacts with itself. In terms of assembly, interacts with RNA-directed RNA polymerase nsP4. Interacts with mRNA-capping enzyme nsP1. Interacts with KPNA1/karyopherin-alpha1; this interaction probably allows the active transport of protease nsP2 into the host nucleus. Mg(2+) serves as cofactor. It depends on Mn(2+) as a cofactor. Specific enzymatic cleavages in vivo yield mature proteins. The processing of the polyprotein is temporally regulated. In early stages (1.7 hpi), P1234 is first cleaved in trans through its nsP2 protease activity, releasing P123' and nsP4, which associate to form the early replication complex. At the same time, P1234 is also cut at the nsP1/nsP2 site early in infection but with lower efficiency. After replication of the viral minus-strand RNAs (4 hpi), the polyproteins are cut at the nsP1/nsP2 and nsP2/nsP3 sites very efficiently, preventing accumulation of P123' and P1234 and allowing the formation of the late replication complex. NsP3'/nsP4 site is not cleaved anymore and P34 is produced rather than nsP4. In terms of processing, specific enzymatic cleavages in vivo yield mature proteins. The processing of the polyprotein is temporally regulated. In early stages (1.7 hpi), P123 is cleaved at the nsP1/nsP2 site with low efficiency. After replication of the viral minus-strand RNAs (4 hpi), the polyproteins are cut at the nsP1/nsP2 and nsP2/nsP3 sites very efficiently, preventing accumulation of P123 and allowing the formation of the late replication complex. Post-translationally, specific enzymatic cleavages in vivo yield mature proteins. The processing of the polyprotein is temporally regulated. In early stages (1.7 hpi), P123' is cleaved at the nsP1/nsP2 site with low efficiency. After replication of the viral minus-strand RNAs (4 hpi), the polyproteins are cut at the nsP1/nsP2 and nsP2/nsP3 sites very efficiently, preventing accumulation of P123' and allowing the formation of the late replication complex. Palmitoylated by host palmitoyltransferases ZDHHC2 and ZDHHC19. In terms of processing, phosphorylated by host on serines and threonines. Post-translationally, ubiquitinated; targets the protein for rapid degradation via the ubiquitin system. Nsp4 is present in extremely low quantities due to low frequency of translation through the amber stop-codon and the degradation by the ubiquitin pathway.

It localises to the host cytoplasmic vesicle membrane. It is found in the host cell membrane. Its subcellular location is the host cell projection. The protein localises to the host filopodium. The protein resides in the host nucleus. It localises to the host cytoplasm. It catalyses the reaction GTP + S-adenosyl-L-methionine = N(7)-methyl-GTP + S-adenosyl-L-homocysteine. It carries out the reaction N(7)-methyl-GTP + L-histidyl-[protein] = N(tele)-(N(7)-methylguanosine 5'-phospho)-L-histidyl-[protein] + diphosphate. The catalysed reaction is N(tele)-(N(7)-methylguanosine 5'-phospho)-L-histidyl-[protein] + a 5'-end diphospho-(purine-ribonucleoside) in mRNA + H(+) = a 5'-end (N(7)-methyl 5'-triphosphoguanosine)-(purine-ribonucleoside) in mRNA + L-histidyl-[protein]. The enzyme catalyses a 5'-end triphospho-ribonucleoside in mRNA + H2O = a 5'-end diphospho-ribonucleoside in mRNA + phosphate + H(+). It catalyses the reaction a ribonucleoside 5'-triphosphate + H2O = a ribonucleoside 5'-diphosphate + phosphate + H(+). It carries out the reaction ATP + H2O = ADP + phosphate + H(+). The catalysed reaction is RNA(n) + a ribonucleoside 5'-triphosphate = RNA(n+1) + diphosphate. The enzyme catalyses 4-O-(ADP-D-ribosyl)-L-aspartyl-[protein] + H2O = L-aspartyl-[protein] + ADP-D-ribose + H(+). It catalyses the reaction 5-O-(ADP-D-ribosyl)-L-glutamyl-[protein] + H2O = L-glutamyl-[protein] + ADP-D-ribose + H(+). It carries out the reaction RNA(n) + ATP = RNA(n)-3'-adenine ribonucleotide + diphosphate. The catalysed reaction is ADP-alpha-D-ribose 1''-phosphate + H2O = ADP-D-ribose + phosphate. Inhibited by sinefungin. Its function is as follows. Inactive precursor of the viral replicase, which is activated by cleavages carried out by the viral protease nsP2. Functionally, the early replication complex formed by the polyprotein P123 and nsP4 synthesizes the minus-strand RNAs (antigenome). Polyprotein P123 is a short-lived polyprotein that accumulates during early stage of infection. As soon P123 is cleaved into mature proteins, the plus-strand RNAs synthesis begins. In terms of biological role, the early replication complex formed by the polyprotein P123' and nsP4 synthesizes minus-strand RNAs (antigenome). Polyprotein P123' is a short-lived polyprotein that accumulates during early stage of infection. As soon P123' is cleaved into mature proteins, the plus-strand RNAs synthesis begins. Cytoplasmic capping enzyme that catalyzes two virus-specific reactions: methyltransferase and nsP1 guanylyltransferase. mRNA-capping is necessary since all viral RNAs are synthesized in the cytoplasm, and host capping enzymes are restricted to the nucleus. The enzymatic reaction involves a covalent link between 7-methyl-GMP and nsP1, whereas eukaryotic capping enzymes form a covalent complex only with GMP. NsP1 capping consists in the following reactions: GTP is first methylated into 7-methyl-GMP and then is covalently linked to nsP1 to form the m7GMp-nsP1 complex from which 7-methyl-GMP complex is transferred to the mRNA to create the cap structure. NsP1 is also needed for the initiation of the minus-strand RNAs synthesis. Probably serves as a membrane anchor for the replication complex composed of nsP1-nsP4. Nsp1 is needed for the initiation of the minus-strand RNAs synthesis. Palmitoylated nsP1 is remodeling host cell cytoskeleton, and induces filopodium-like structure formation at the surface of the host cell. Its function is as follows. Multifunctional protein whose N-terminus is part of the RNA polymerase complex and displays NTPase, RNA triphosphatase and helicase activities. NTPase and RNA triphosphatase are involved in viral RNA capping and helicase keeps a check on the dsRNA replication intermediates. The C-terminus harbors a protease that specifically cleaves the polyproteins and releases the mature proteins. Required for the shutoff of minus-strand RNAs synthesis. Inhibits host translation to ensure maximal viral gene expression and evade host immune response. Functionally, seems to be essential for minus-strand RNAs and subgenomic 26S mRNAs synthesis. Displays mono-ADP-ribosylhydrolase activity. ADP-ribosylation is a post-translational modification that controls various processes of the host cell and the virus probably needs to revert it for optimal viral replication. Binds proteins of FXR and G3BP families and sequesters them into the viral RNA replication complexes thereby inhibiting the formation of host stress granules on viral mRNAs. The nsp3-FXR and nsp3-G3BP complexes bind viral RNAs and probably orchestrate the assembly of viral replication complexes, thanks to the ability of G3BP and FXR family members to self-assemble and bind DNA. In terms of biological role, seems to be essential for minus-strand RNAs and subgenomic 26S mRNAs synthesis. Displays mono-ADP-ribosylhydrolase activity. ADP-ribosylation is a post-translational modification that controls various processes of the host cell and the virus probably needs to revert it for optimal viral replication. Binds proteins of FXR and G3BP families and sequesters them into the viral RNA replication complexes thereby inhibiting the formation of host stress granules on viral mRNAs. The nsp3'-FXR and nsp3-G3BP complexes bind viral RNAs and probably orchestrate the assembly of viral replication complexes, thanks to the ability of G3BP and FXR family members to self-assemble and bind DNA. RNA dependent RNA polymerase. Replicates genomic and antigenomic RNA by recognizing replications specific signals. The early replication complex formed by the polyprotein P123 and nsP4 synthesizes minus-strand RNAs. The late replication complex composed of fully processed nsP1-nsP4 is responsible for the production of genomic and subgenomic plus-strand RNAs. The polypeptide is Polyprotein P1234 (Eastern equine encephalitis virus (strain PE-0.0155) (EEEV)).